The sequence spans 308 residues: Ribonuclease HIII (308 aa).

Residues 91 to 308 form the RNase H type-2 domain; it reads KNVIGSDEVG…TEKALKMVKK (218 aa). A divalent metal cation-binding residues include Asp-97, Glu-98, and Asp-202.

This sequence belongs to the RNase HII family. RnhC subfamily. The cofactor is Mn(2+). Requires Mg(2+) as cofactor.

It localises to the cytoplasm. It catalyses the reaction Endonucleolytic cleavage to 5'-phosphomonoester.. Endonuclease that specifically degrades the RNA of RNA-DNA hybrids. In Listeria monocytogenes serovar 1/2a (strain ATCC BAA-679 / EGD-e), this protein is Ribonuclease HIII.